The chain runs to 1528 residues: Mitogen-activated protein kinase kinae kinase MCK1 (1528 aa).

Over residues 1 to 11 (MYPGSSQSRPY) the composition is skewed to low complexity. Disordered regions lie at residues 1-84 (MYPG…PAPR), 109-208 (ATAP…VPGI), 303-418 (VHAR…NNVR), 449-481 (INGR…KLPF), 607-652 (VKPP…EARL), 695-731 (GKPV…APSA), 746-786 (VQGS…SQPM), 811-929 (SANN…SDDG), 943-1012 (KKAK…EDGK), and 1086-1191 (ATPL…ALLR). Positions 12–21 (QVPPPPPMSP) are enriched in pro residues. Positions 22–31 (PLSQMHQQMS) are enriched in low complexity. Residues 53–64 (APPPPPPGPPPA) are compositionally biased toward pro residues. The span at 157–173 (SSQTWQTTSSSSTNTAS) shows a compositional bias: low complexity. Polar residues-rich tracts occupy residues 174–183 (VNDNVQSNAP), 191–205 (NNSA…SSNV), and 318–327 (HGRQGSINSR). Positions 328–337 (GNDKGTHDGS) are enriched in basic and acidic residues. The segment covering 338 to 363 (DSPNTPSSQSRSTTIPTFPDGSSFSN) has biased composition (polar residues). The span at 396-408 (SSTPKSSTLSVSP) shows a compositional bias: low complexity. Residues 409–418 (HSSRFGNNVR) show a composition bias toward polar residues. Composition is skewed to polar residues over residues 613 to 622 (SQQSTWSAGD) and 630 to 641 (GTSSSMSRQQNT). 2 stretches are compositionally biased toward basic and acidic residues: residues 642 to 652 (LKDDQSEEARL) and 698 to 714 (VDFD…KNTD). Over residues 846-860 (RSQTAGDLSPISQMP) the composition is skewed to polar residues. The span at 917-928 (QSDDDSGDDSDD) shows a compositional bias: acidic residues. Over residues 977-986 (VSFNSPQSAR) the composition is skewed to polar residues. The segment covering 1001–1012 (PKSDMWDSEDGK) has biased composition (basic and acidic residues). Positions 1086–1111 (ATPLNSLPPSRVQSMYNESDTLGSDE) are enriched in polar residues. The segment covering 1142–1152 (SIREKARGAHE) has biased composition (basic and acidic residues). Positions 1158–1188 (TQTSMAAPQGLSRSGGTPATETQPTQNNSSA) are enriched in polar residues. The 270-residue stretch at 1238–1507 (WFKGQLIGKG…NKLLSQHPFC (270 aa)) folds into the Protein kinase domain. Residues 1244-1252 (IGKGTYGRV) and Lys-1267 each bind ATP.

It belongs to the protein kinase superfamily. STE Ser/Thr protein kinase family. MAP kinase kinase kinase subfamily. Interacts with the adapter protein MST50 and MIP11.

It carries out the reaction L-seryl-[protein] + ATP = O-phospho-L-seryl-[protein] + ADP + H(+). The catalysed reaction is L-threonyl-[protein] + ATP = O-phospho-L-threonyl-[protein] + ADP + H(+). In terms of biological role, mitogen-activated protein kinase kinase kinase; part of the MCK1-MKK2-MPS1 MAP kinase (MAPK) signal transduction cascade that is essential for appressorium formation, penetration and invasive growth. Beside its role in pathogenesis, the MPS1 cascade is active in conidiation and cellular stress responses. Targets downstream of the the MPS1-MAPK pathway include transcription factors MIG1 and SWI6, as well as GSK1 and MPG1. The chain is Mitogen-activated protein kinase kinae kinase MCK1 from Pyricularia oryzae (strain 70-15 / ATCC MYA-4617 / FGSC 8958) (Rice blast fungus).